The primary structure comprises 618 residues: Sphingomyelin phosphodiesterase 2 (618 aa).

Residues 1–22 (MQQPLIILGIGIVLALVSNVES) form the signal peptide. Residues 68 to 151 (RKMSCLFCTF…AFIANCGHSD (84 aa)) form the Saposin B-type domain. Disulfide bonds link C72/C147, C75/C140, and C103/C114. N89 is a glycosylation site (N-linked (GlcNAc...) asparagine). N-linked (GlcNAc...) asparagine glycosylation is present at N159. Residues D189 and H191 each contribute to the Zn(2+) site. Intrachain disulfides connect C204–C216 and C217–C249. D278 provides a ligand contact to Zn(2+). The N-linked (GlcNAc...) asparagine glycan is linked to N298. Zn(2+) is bound by residues N318, H427, H461, and H463. C387 and C435 are oxidised to a cystine. 2 N-linked (GlcNAc...) asparagine glycosylation sites follow: N525 and N568. Intrachain disulfides connect C588-C594 and C600-C613.

Belongs to the acid sphingomyelinase family. It depends on Zn(2+) as a cofactor.

It localises to the secreted. The enzyme catalyses a sphingomyelin + H2O = phosphocholine + an N-acylsphing-4-enine + H(+). It carries out the reaction an N-acyl-15-methylhexadecasphing-4-enine-1-phosphocholine + H2O = an N-acyl-15-methylhexadecasphing-4-enine + phosphocholine + H(+). Its pathway is lipid metabolism; sphingolipid metabolism. Functionally, sphingomyelin phosphodiesterase (sphingomyelinase) that converts sphingomyelin (N-acyl-sphingoid-1-phosphocholine) to ceramide (N-acyl-sphingoid base) and phosphocholine at acidic pH. Displays its enzymatic activity when secreted. May play distinct roles in signaling. This Caenorhabditis elegans protein is Sphingomyelin phosphodiesterase 2 (asm-2).